The chain runs to 1396 residues: ATP-dependent helicase/nuclease subunit A (1396 aa).

Residues 1-25 (MNREALCHDDPIGHDRLRPDSIPRD) form a disordered region. Residues 26 to 532 (PKWTDEQWQA…IDLAKNFRSR (507 aa)) enclose the UvrD-like helicase ATP-binding domain. 47–54 (AAAGAGKT) contacts ATP. 2 disordered regions span residues 590–649 (DADG…GQPT) and 1171–1205 (HSPE…PSPD). In terms of domain architecture, UvrD-like helicase C-terminal spans 615–920 (HKNIAKAGES…RIMSIHKSKG (306 aa)). Low complexity predominate over residues 1181 to 1199 (TPPSLEIPPSLETPPSLET).

The protein belongs to the helicase family. AddA subfamily. As to quaternary structure, heterodimer of AddA and AddB/RexB. Mg(2+) serves as cofactor.

The enzyme catalyses Couples ATP hydrolysis with the unwinding of duplex DNA by translocating in the 3'-5' direction.. The catalysed reaction is ATP + H2O = ADP + phosphate + H(+). The heterodimer acts as both an ATP-dependent DNA helicase and an ATP-dependent, dual-direction single-stranded exonuclease. Recognizes the chi site generating a DNA molecule suitable for the initiation of homologous recombination. The AddA nuclease domain is required for chi fragment generation; this subunit has the helicase and 3' -&gt; 5' nuclease activities. This Heliobacterium modesticaldum (strain ATCC 51547 / Ice1) protein is ATP-dependent helicase/nuclease subunit A.